Here is a 316-residue protein sequence, read N- to C-terminus: UDP-N-acetylenolpyruvoylglucosamine reductase (316 aa).

An FAD-binding PCMH-type domain is found at 27–225 (VGGKAERFYR…KTAINALLKK (199 aa)). Arginine 190 is an active-site residue. The active-site Proton donor is the serine 239. Glutamate 309 is an active-site residue.

This sequence belongs to the MurB family. FAD serves as cofactor.

The protein localises to the cytoplasm. The enzyme catalyses UDP-N-acetyl-alpha-D-muramate + NADP(+) = UDP-N-acetyl-3-O-(1-carboxyvinyl)-alpha-D-glucosamine + NADPH + H(+). The protein operates within cell wall biogenesis; peptidoglycan biosynthesis. Cell wall formation. The polypeptide is UDP-N-acetylenolpyruvoylglucosamine reductase (Coxiella burnetii (strain Dugway 5J108-111)).